The chain runs to 502 residues: Lysine--tRNA ligase (502 aa).

Positions 412 and 419 each coordinate Mg(2+).

The protein belongs to the class-II aminoacyl-tRNA synthetase family. As to quaternary structure, homodimer. The cofactor is Mg(2+).

The protein localises to the cytoplasm. The enzyme catalyses tRNA(Lys) + L-lysine + ATP = L-lysyl-tRNA(Lys) + AMP + diphosphate. This chain is Lysine--tRNA ligase, found in Nitrosomonas europaea (strain ATCC 19718 / CIP 103999 / KCTC 2705 / NBRC 14298).